The following is a 42-amino-acid chain: Kappa-actitoxin-Ael2a (42 aa).

Cystine bridges form between C4/C37, C6/C30, and C20/C38.

This sequence belongs to the sea anemone type 3 (BDS) potassium channel toxin family.

The protein localises to the secreted. It is found in the nematocyst. In terms of biological role, peptide with both antimicrobial and neurotoxin activities. This toxin acts both on ERG potassium channels and sodium channels. It potently and reversibly inhibits human Kv11.1/KCNH2/ERG1 (IC(50)=34 nM), rat Kv11.1/KCNH2/ERG1 and Kv11.3/KCNH7/ERG3 voltage-gated potassium channels in a similar potency. It acts as a gating-modifier toxin that shifts the voltage-dependence of ERG activation in the positive direction and suppresses its current amplitudes elicited by strong depolarizing pulses. On sodium channels, it blocks Nav1.2/SCN2A (EC(50)=31 nM), Nav1.3/SCN3A, Nav1.4/SCN4A, Nav1.5/SCN5A, Nav1.6/SCN8A, Nav1.8/SCN10A (EC(50)=92 nM). It may act by binding at site 1 or close by, only when the pore is in an open configuration. Shows antibacterial activity against the Gram-negative bacterium S.typhimurium, but not on the bacteria B.subtilis, S.aureus, and P.aeruginosa. In vivo, this toxin does not induce neurotoxic symptoms when injected into mice. This Anthopleura elegantissima (Green aggregating anemone) protein is Kappa-actitoxin-Ael2a.